We begin with the raw amino-acid sequence, 576 residues long: MSQKSQFAYRSSKSIGLVNASENYASPPKFEAISEPARNACYSPNGKLFAYATATQVVINDTESGAKLTQLPAANTYELGFSPLGKYLSTWERPGKEADGTPKQNMKVWNTETGQLVFSFVQRNQTGWNLQYTCDESLAARLVTNEVHFYETGNMSKGPIAKLRVEGISDFALSPGQNHAVAVFIPEKKGAPASVRTYSIPNFNSPLSQKTFFKADKVQFKWNALGTSLLVLTQTEVDKSNKNYYGETNLYLLGITGQFDCRVDLDREGPIHDVCWNADSKEFGIVYGYMPAKTAIFDNRANVVSIIPPAPRNTLIFSPNSRYILLAGFGNLQGSIDIFDAANNMKKITTVEAANCTYCEFSPDSQFLLTAVTSPRLRVDNSIKIWHITGAPMFYEEFNELYQAFWRPRPLNPTLLQNALTSASLPSPPTPHASASKLAAKPSVKPAGAYRPPGARGQNSTFSYRREEIDVMSSGSANKHVNSSRQRVVPGATPVIDGNKKNNKKTKPAVKQVAQPTAEVSDEKKIRSLCKKLRAIDDLKSRLNNNEKLEATQVKKIESEGKVLAELKALGWTPDA.

WD repeat units follow at residues 71-119, 266-307, 308-349, and 351-396; these read LPAA…LVFS, DREG…VSII, PPAP…KKIT, and VEAA…MFYE. 2 disordered regions span residues 422–461 and 475–505; these read SASL…QNST and GSAN…NNKK. Residues 475–486 show a composition bias toward polar residues; sequence GSANKHVNSSRQ.

It belongs to the WD repeat EIF2A family.

Its subcellular location is the cytoplasm. Functions in the early steps of protein synthesis of a small number of specific mRNAs. Acts by directing the binding of methionyl-tRNAi to 40S ribosomal subunits. In contrast to the eIF-2 complex, it binds methionyl-tRNAi to 40S subunits in a codon-dependent manner, whereas the eIF-2 complex binds methionyl-tRNAi to 40S subunits in a GTP-dependent manner. The protein is Eukaryotic translation initiation factor 2A of Schizosaccharomyces pombe (strain 972 / ATCC 24843) (Fission yeast).